Reading from the N-terminus, the 242-residue chain is Small ribosomal subunit protein uS2 (242 aa).

This sequence belongs to the universal ribosomal protein uS2 family.

This is Small ribosomal subunit protein uS2 from Idiomarina loihiensis (strain ATCC BAA-735 / DSM 15497 / L2-TR).